Here is a 546-residue protein sequence, read N- to C-terminus: Major facilitator superfamily transporter MPN_077 (546 aa).

Helical transmembrane passes span 2–22 (WGLV…IDFI), 62–82 (WTIT…VVKF), 88–108 (VMIM…GSPL), 179–199 (AFFI…IAYA), 220–240 (FWGF…PGVG), 248–268 (VWVV…FAWF), 305–325 (LLAI…QTWF), 344–364 (PILL…LSPF), 377–397 (FIFT…ATLG), 401–421 (VVGF…GWSL), 442–462 (IIFG…DIIT), and 485–505 (IAAI…IIYL).

It belongs to the major facilitator superfamily.

The protein resides in the cell membrane. In Mycoplasma pneumoniae (strain ATCC 29342 / M129 / Subtype 1) (Mycoplasmoides pneumoniae), this protein is Major facilitator superfamily transporter MPN_077.